Here is a 255-residue protein sequence, read N- to C-terminus: Acetylglutamate kinase (255 aa).

Substrate-binding positions include 40–41 (GG), arginine 62, and asparagine 153.

This sequence belongs to the acetylglutamate kinase family. ArgB subfamily.

Its subcellular location is the cytoplasm. The catalysed reaction is N-acetyl-L-glutamate + ATP = N-acetyl-L-glutamyl 5-phosphate + ADP. Its pathway is amino-acid biosynthesis; L-arginine biosynthesis; N(2)-acetyl-L-ornithine from L-glutamate: step 2/4. Functionally, catalyzes the ATP-dependent phosphorylation of N-acetyl-L-glutamate. This Bacillus cereus (strain ATCC 14579 / DSM 31 / CCUG 7414 / JCM 2152 / NBRC 15305 / NCIMB 9373 / NCTC 2599 / NRRL B-3711) protein is Acetylglutamate kinase.